A 421-amino-acid chain; its full sequence is Alpha-tubulin N-acetyltransferase 1 (421 aa).

An N-acetyltransferase domain is found at 1–190; that stretch reads MEFPFDVDAL…NNFVIFEGFF (190 aa). At Lys-56 the chain carries N6-acetyllysine; by autocatalysis. Acetyl-CoA is bound at residue 124–137; it reads FYIHESVQRHGHGR. Position 146 is an N6-acetyllysine; by autocatalysis (Lys-146). 160–169 is an acetyl-CoA binding site; that stretch reads SQKLLKFLNK. Residues 196 to 235 form a disordered region; it reads PPAPSLRATRHSRAAAVDPTPAAPARKLPPKRAEGDIKPY. A compositionally biased stretch (low complexity) spans 209–221; that stretch reads AAAVDPTPAAPAR. The segment covering 226–235 has biased composition (basic and acidic residues); the sequence is KRAEGDIKPY. 2 positions are modified to N6-acetyllysine; by autocatalysis: Lys-233 and Lys-244. A disordered region spans residues 252–284; the sequence is PLNRAPRRATPPAHPPPRSSSLGNSPERGPLRP. Phosphoserine is present on residues Ser-272 and Ser-276. An Asymmetric dimethylarginine modification is found at Arg-305. Residues 306-402 are disordered; that stretch reads LLLAADPGGS…PAQSWTVGGD (97 aa). A Phosphoserine modification is found at Ser-315. An Omega-N-methylarginine modification is found at Arg-323. Residues 342–354 show a composition bias toward polar residues; the sequence is VNSSSPNTGNQDS. Residues 355–367 are compositionally biased toward basic and acidic residues; that stretch reads KQGEQETKNRSAS.

The protein belongs to the acetyltransferase ATAT1 family. In terms of assembly, component of the BBSome complex. Interacts with AP2 alpha-adaptins, including AP2A2, but not with AP1 gamma-adaptin (AP1G1/AP1G2); this interaction is required for efficient alpha-tubulin acetylation, hence clathrin-coated pits are sites of microtubule acetylation. Autoacetylation strongly increases tubulin acetylation.

The protein resides in the cytoplasm. It is found in the membrane. It localises to the clathrin-coated pit. Its subcellular location is the cell junction. The protein localises to the focal adhesion. The protein resides in the cell projection. It is found in the axon. It localises to the cytoskeleton. Its subcellular location is the spindle. It carries out the reaction L-lysyl-[alpha-tubulin] + acetyl-CoA = N(6)-acetyl-L-lysyl-[alpha-tubulin] + CoA + H(+). In terms of biological role, specifically acetylates 'Lys-40' in alpha-tubulin on the lumenal side of microtubules. Promotes microtubule destabilization and accelerates microtubule dynamics; this activity may be independent of acetylation activity. Acetylates alpha-tubulin with a slow enzymatic rate, due to a catalytic site that is not optimized for acetyl transfer. Enters the microtubule through each end and diffuses quickly throughout the lumen of microtubules. Acetylates only long/old microtubules because of its slow acetylation rate since it does not have time to act on dynamically unstable microtubules before the enzyme is released. Required for normal sperm flagellar function. Promotes directional cell locomotion and chemotaxis, through AP2A2-dependent acetylation of alpha-tubulin at clathrin-coated pits that are concentrated at the leading edge of migrating cells. May facilitate primary cilium assembly. This Homo sapiens (Human) protein is Alpha-tubulin N-acetyltransferase 1.